A 164-amino-acid polypeptide reads, in one-letter code: 2S seed storage protein 3 (164 aa).

Residues 1–21 (MANKLFLVCATLALCFLLTNA) form the signal peptide. Propeptides lie at residues 22 to 37 (SIYRTVVEFEEDDASN) and 73 to 81 (GPSLDDEFD).

It belongs to the 2S seed storage albumins family. In terms of assembly, the mature protein consists of a small and a large chain linked by disulfide bonds. Interacts with AHK2.

Its function is as follows. This is a 2S seed storage protein. The protein is 2S seed storage protein 3 (AT2S3) of Arabidopsis thaliana (Mouse-ear cress).